Reading from the N-terminus, the 365-residue chain is tRNA(Met) cytidine acetate ligase (365 aa).

ATP-binding positions include 7–20 (IAEFNPFHNGHKYL), glycine 96, asparagine 152, and arginine 175.

The protein belongs to the TmcAL family.

It localises to the cytoplasm. The enzyme catalyses cytidine(34) in elongator tRNA(Met) + acetate + ATP = N(4)-acetylcytidine(34) in elongator tRNA(Met) + AMP + diphosphate. Catalyzes the formation of N(4)-acetylcytidine (ac(4)C) at the wobble position of elongator tRNA(Met), using acetate and ATP as substrates. First activates an acetate ion to form acetyladenylate (Ac-AMP) and then transfers the acetyl group to tRNA to form ac(4)C34. This Streptococcus pneumoniae (strain P1031) protein is tRNA(Met) cytidine acetate ligase.